A 471-amino-acid polypeptide reads, in one-letter code: Anthocyanidin 3-O-glucosyltransferase (471 aa).

H24 serves as the catalytic Proton acceptor. H24 contacts an anthocyanidin. The active-site Charge relay is the D130. Position 152 (T152) interacts with UDP-alpha-D-glucose. H161 is an an anthocyanidin binding site. Residues A352, Q354, H369, W372, S374, and E377 each contribute to the UDP-alpha-D-glucose site. G392 lines the an anthocyanidin pocket. The UDP-alpha-D-glucose site is built by D393 and Q394.

It belongs to the UDP-glycosyltransferase family.

It catalyses the reaction an anthocyanidin + UDP-alpha-D-glucose + H(+) = an anthocyanidin 3-O-beta-D-glucoside + UDP. The protein operates within pigment biosynthesis; anthocyanin biosynthesis. In terms of biological role, in the presence of other necessary color factors, this glycosylation reaction allows the accumulation of anthocyanin pigments. The protein is Anthocyanidin 3-O-glucosyltransferase (BZ1) of Zea mays (Maize).